Reading from the N-terminus, the 172-residue chain is uncharacterized protein (172 aa).

The 55-residue stretch at 21–75 (FKRILLELGLTLKEFSEISGIPYSTLYKVIQGKDFRVSTLIKILKTIRSFEKDEN) folds into the HTH cro/C1-type domain. The H-T-H motif DNA-binding region spans 32–51 (LKEFSEISGIPYSTLYKVIQ).

This is an uncharacterized protein from Methanocaldococcus jannaschii (strain ATCC 43067 / DSM 2661 / JAL-1 / JCM 10045 / NBRC 100440) (Methanococcus jannaschii).